A 377-amino-acid polypeptide reads, in one-letter code: Methionine import ATP-binding protein MetN 2 (377 aa).

One can recognise an ABC transporter domain in the interval 25-262 (IRIEHLSKTF…PKSAVARSFL (238 aa)). 59–66 (GRSGAGKS) is a binding site for ATP.

Belongs to the ABC transporter superfamily. Methionine importer (TC 3.A.1.24) family. As to quaternary structure, the complex is composed of two ATP-binding proteins (MetN), two transmembrane proteins (MetI) and a solute-binding protein (MetQ).

The protein resides in the cell inner membrane. It catalyses the reaction L-methionine(out) + ATP + H2O = L-methionine(in) + ADP + phosphate + H(+). The catalysed reaction is D-methionine(out) + ATP + H2O = D-methionine(in) + ADP + phosphate + H(+). In terms of biological role, part of the ABC transporter complex MetNIQ involved in methionine import. Responsible for energy coupling to the transport system. This chain is Methionine import ATP-binding protein MetN 2, found in Rhodopseudomonas palustris (strain ATCC BAA-98 / CGA009).